Consider the following 471-residue polypeptide: Cytochrome b-c1 complex subunit 1, mitochondrial (471 aa).

The protein belongs to the peptidase M16 family.

It is found in the mitochondrion matrix. The chain is Cytochrome b-c1 complex subunit 1, mitochondrial (ucr-1) from Caenorhabditis elegans.